The sequence spans 94 residues: Co-chaperonin GroES (94 aa).

This sequence belongs to the GroES chaperonin family. In terms of assembly, heptamer of 7 subunits arranged in a ring. Interacts with the chaperonin GroEL.

The protein localises to the cytoplasm. In terms of biological role, together with the chaperonin GroEL, plays an essential role in assisting protein folding. The GroEL-GroES system forms a nano-cage that allows encapsulation of the non-native substrate proteins and provides a physical environment optimized to promote and accelerate protein folding. GroES binds to the apical surface of the GroEL ring, thereby capping the opening of the GroEL channel. In Geobacillus sp. (strain WCH70), this protein is Co-chaperonin GroES.